We begin with the raw amino-acid sequence, 820 residues long: G-type lectin S-receptor-like serine/threonine-protein kinase At1g11300 (820 aa).

The signal sequence occupies residues 1 to 26; that stretch reads MRLHESSSPFVCILVLSCFFLSVSLA. Residues 27-150 enclose the Bulb-type lectin domain; the sequence is QERAFFSGKL…SSDAYLWESF (124 aa). At 27–436 the chain is on the extracellular side; that stretch reads QERAFFSGKL…SEIKTKDKRP (410 aa). Asparagine 37, asparagine 58, asparagine 87, asparagine 115, asparagine 123, asparagine 173, asparagine 211, asparagine 247, asparagine 256, and asparagine 282 each carry an N-linked (GlcNAc...) asparagine glycan. The region spanning 290-326 is the EGF-like; atypical domain; it reads PATECDNYRRCGEFATCNPRKNPLCSCIRGFRPRNLI. 2 disulfide bridges follow: cysteine 294–cysteine 306 and cysteine 300–cysteine 314. Residues asparagine 332 and asparagine 351 are each glycosylated (N-linked (GlcNAc...) asparagine). In terms of domain architecture, PAN spans 345-425; it reads CERQNNNGSA…SGLDLYIRLA (81 aa). Intrachain disulfides connect cysteine 379–cysteine 400 and cysteine 383–cysteine 389. A glycan (N-linked (GlcNAc...) asparagine) is linked at asparagine 404. The chain crosses the membrane as a helical span at residues 437–457; the sequence is ILIGTILAGGIFVVAACVLLA. The Cytoplasmic segment spans residues 458-820; the sequence is RRIVMKKRAK…NVTITDVTGR (363 aa). The Protein kinase domain maps to 509 to 788; the sequence is FSLRNKLGQG…DIPEPKQPAF (280 aa). Residues 515-523 and lysine 537 each bind ATP; that span reads LGQGGFGPV. The tract at residues 598–615 is caM-binding; sequence RRAKLLDWKTRFNIINGI. Aspartate 634 serves as the catalytic Proton acceptor.

This sequence belongs to the protein kinase superfamily. Ser/Thr protein kinase family.

The protein resides in the cell membrane. It catalyses the reaction L-seryl-[protein] + ATP = O-phospho-L-seryl-[protein] + ADP + H(+). The enzyme catalyses L-threonyl-[protein] + ATP = O-phospho-L-threonyl-[protein] + ADP + H(+). The polypeptide is G-type lectin S-receptor-like serine/threonine-protein kinase At1g11300 (Arabidopsis thaliana (Mouse-ear cress)).